The sequence spans 178 residues: Killin (178 aa).

Residues S8–W50 mediate DNA binding.

It is found in the nucleus. Functionally, DNA-binding protein involved in S phase checkpoint control-coupled apoptosis by mediating p53/TP53-induced apoptosis. Has the ability to inhibit DNA synthesis and S phase arrest coupled to apoptosis. Has affinity to both double- and single-stranded DNA. This chain is Killin (KLLN), found in Homo sapiens (Human).